Here is a 403-residue protein sequence, read N- to C-terminus: Ubiquitin-like modifier-activating enzyme 5 (403 aa).

ATP contacts are provided by Gly81, Asp102, Lys125, Asn148, and Asn182. Zn(2+) is bound by residues Cys224 and Cys227. The Glycyl thioester intermediate role is filled by Cys248. Positions 301 and 306 each coordinate Zn(2+). Basic and acidic residues predominate over residues 306 to 315 (CRKQQEEYKK). The interval 306-337 (CRKQQEEYKKRAPAQPTQETAPQEEEEVVHED) is disordered. Positions 333–345 (VVHEDNEWGIELV) match the UFM1-interacting sequence (UIS) motif. Positions 346-376 (SEVSEEELKNSSGPVPTLPEGITVAYTVPKK) are linker. 2 positions are modified to phosphoserine: Ser357 and Ser392. The UFC1-binding sequence (UFC) signature appears at 388-403 (DSGESLEDLMARMKKM).

It belongs to the ubiquitin-activating E1 family. UBA5 subfamily. Homodimer; homodimerization is required for UFM1 activation. Interacts (via UIS motif) with UFM1; binds UFM1 via a trans-binding mechanism in which UFM1 interacts with distinct sites in both subunits of the UBA5 homodimer. Interacts (via C-terminus) with UFC1. Interacts (via UIS motif) with GABARAPL2 and, with lower affinity, with GABARAP and GABARAPL1.

The protein localises to the cytoplasm. It is found in the nucleus. It localises to the endoplasmic reticulum membrane. Its subcellular location is the golgi apparatus. In terms of biological role, E1-like enzyme which specifically catalyzes the first step in ufmylation. Activates UFM1 by first adenylating its C-terminal glycine residue with ATP, and thereafter linking this residue to the side chain of a cysteine residue in E1, yielding a UFM1-E1 thioester and free AMP. Activates UFM1 via a trans-binding mechanism, in which UFM1 interacts with distinct sites in both subunits of the UBA5 homodimer. Trans-binding also promotes stabilization of the UBA5 homodimer, and enhances ATP-binding. Transfer of UFM1 from UBA5 to the E2-like enzyme UFC1 also takes place using a trans mechanism. Ufmylation plays a key role in various processes, such as ribosome recycling, response to DNA damage, interferon response or reticulophagy (also called ER-phagy). Ufmylation is essential for erythroid differentiation of both megakaryocytes and erythrocytes. The protein is Ubiquitin-like modifier-activating enzyme 5 of Rattus norvegicus (Rat).